The following is a 299-amino-acid chain: Putative glycylpeptide N-tetradecanoyltransferase (299 aa).

This sequence belongs to the NMT family.

The enzyme catalyses N-terminal glycyl-[protein] + tetradecanoyl-CoA = N-tetradecanoylglycyl-[protein] + CoA + H(+). Its function is as follows. Adds a myristoyl group to the N-terminal glycine residue of certain proteins. This chain is Putative glycylpeptide N-tetradecanoyltransferase, found in Amsacta moorei entomopoxvirus (AmEPV).